The sequence spans 313 residues: Biotin synthase (313 aa).

In terms of domain architecture, Radical SAM core spans 28-258 (NFGNDIELCS…LFPQARLRLS (231 aa)). Cys46, Cys50, and Cys53 together coordinate [4Fe-4S] cluster. [2Fe-2S] cluster contacts are provided by Cys90, Cys121, Cys181, and Arg256.

It belongs to the radical SAM superfamily. Biotin synthase family. In terms of assembly, homodimer. [4Fe-4S] cluster serves as cofactor. It depends on [2Fe-2S] cluster as a cofactor.

The enzyme catalyses (4R,5S)-dethiobiotin + (sulfur carrier)-SH + 2 reduced [2Fe-2S]-[ferredoxin] + 2 S-adenosyl-L-methionine = (sulfur carrier)-H + biotin + 2 5'-deoxyadenosine + 2 L-methionine + 2 oxidized [2Fe-2S]-[ferredoxin]. The protein operates within cofactor biosynthesis; biotin biosynthesis; biotin from 7,8-diaminononanoate: step 2/2. Its function is as follows. Catalyzes the conversion of dethiobiotin (DTB) to biotin by the insertion of a sulfur atom into dethiobiotin via a radical-based mechanism. The polypeptide is Biotin synthase (Francisella tularensis subsp. mediasiatica (strain FSC147)).